Reading from the N-terminus, the 225-residue chain is Membrane-spanning 4-domains subfamily A member 4D (225 aa).

At 1 to 42 (MQGLAQTTMAVVPGGAPPSENSVIKSQMWNKNKEKFLKGEPK) the chain is on the cytoplasmic side. A helical transmembrane segment spans residues 43–63 (VLGAIQVMIAFINFSLGIIII). Over 64-73 (LNRVSERFMS) the chain is Extracellular. The helical transmembrane segment at 74–94 (VLLLAPFWGSIMFIFSGSLSI) threads the bilayer. The Cytoplasmic segment spans residues 95–113 (AAGVKPTKAMIISSLSVNT). Residues 114 to 134 (ISSVLAVAASIIGVISVISGV) form a helical membrane-spanning segment. At 135–148 (FRQFRSQPAIASLD) the chain is on the extracellular side. Residues 149-169 (VLMTILNMLEFCIAVSVSAFG) traverse the membrane as a helical segment. The Cytoplasmic portion of the chain corresponds to 170–225 (CKASCCNSSEVLVVLPSNSAVTVTAPPMILQPLPPSECQGKNVPENLYRNQPGEIV).

This sequence belongs to the MS4A family. As to expression, expressed in thymus, spleen, peripheral lymph node, liver, kidney, heart, colon, lung, and testes.

It is found in the membrane. May be involved in signal transduction as a component of a multimeric receptor complex. The chain is Membrane-spanning 4-domains subfamily A member 4D (Ms4a4d) from Mus musculus (Mouse).